Consider the following 398-residue polypeptide: MTVESTAAPAKVNLMGLSQAKLEAFFDSLGEKRFRATQVLKWIHQMGVTDFEQMTNISKPLRDKLSQVAEAVAPEVVNQWDSSDGTRKFLIRVGGGNAVETVYIPDGDRGTLCVSSQVGCSLDCSFCATGKQGFNRDLTAAEIIGQVWQAAKSFNQFGVGAQRKITNVVMMGMGEPLLNFDNVVDSMNLMMHDNCYGLSKRRVTLSTSGVVPALDKLGEYTDACLAISLHAPNNALRNELVPINKKYPIEMLLASAKRYIDGLPDVRRKMTIEYTLIDQVNDRPEHAHELAELLKDIPVKINLIPFNPFNLSNYKRVSNNALRRFQQILIDAGYTTTVRTTRGDDIDAACGQLAGQVNDRTKRSQRYKIDKNALDASNADIIPVKLVDEADVSITFNG.

The active-site Proton acceptor is Glu-100. One can recognise a Radical SAM core domain in the interval 106–345; it reads DGDRGTLCVS…TTVRTTRGDD (240 aa). A disulfide bridge links Cys-113 with Cys-350. Residues Cys-120, Cys-124, and Cys-127 each contribute to the [4Fe-4S] cluster site. S-adenosyl-L-methionine is bound by residues 174–175, Ser-206, 228–230, and Asn-307; these read GE and SLH. The active-site S-methylcysteine intermediate is the Cys-350.

This sequence belongs to the radical SAM superfamily. RlmN family. The cofactor is [4Fe-4S] cluster.

Its subcellular location is the cytoplasm. The catalysed reaction is adenosine(2503) in 23S rRNA + 2 reduced [2Fe-2S]-[ferredoxin] + 2 S-adenosyl-L-methionine = 2-methyladenosine(2503) in 23S rRNA + 5'-deoxyadenosine + L-methionine + 2 oxidized [2Fe-2S]-[ferredoxin] + S-adenosyl-L-homocysteine. The enzyme catalyses adenosine(37) in tRNA + 2 reduced [2Fe-2S]-[ferredoxin] + 2 S-adenosyl-L-methionine = 2-methyladenosine(37) in tRNA + 5'-deoxyadenosine + L-methionine + 2 oxidized [2Fe-2S]-[ferredoxin] + S-adenosyl-L-homocysteine. Its function is as follows. Specifically methylates position 2 of adenine 2503 in 23S rRNA and position 2 of adenine 37 in tRNAs. m2A2503 modification seems to play a crucial role in the proofreading step occurring at the peptidyl transferase center and thus would serve to optimize ribosomal fidelity. The protein is Dual-specificity RNA methyltransferase RlmN of Saccharophagus degradans (strain 2-40 / ATCC 43961 / DSM 17024).